Reading from the N-terminus, the 206-residue chain is Large ribosomal subunit protein uL4 (206 aa).

This sequence belongs to the universal ribosomal protein uL4 family. Part of the 50S ribosomal subunit.

In terms of biological role, one of the primary rRNA binding proteins, this protein initially binds near the 5'-end of the 23S rRNA. It is important during the early stages of 50S assembly. It makes multiple contacts with different domains of the 23S rRNA in the assembled 50S subunit and ribosome. Forms part of the polypeptide exit tunnel. The polypeptide is Large ribosomal subunit protein uL4 (Nitratidesulfovibrio vulgaris (strain ATCC 29579 / DSM 644 / CCUG 34227 / NCIMB 8303 / VKM B-1760 / Hildenborough) (Desulfovibrio vulgaris)).